The primary structure comprises 382 residues: Aminotransferase FGSG_00049 (382 aa).

Residue R80 participates in pyridoxal 5'-phosphate binding. K181 carries the N6-(pyridoxal phosphate)lysine modification. Residue E217 coordinates pyridoxal 5'-phosphate.

The protein belongs to the class-IV pyridoxal-phosphate-dependent aminotransferase family. Pyridoxal 5'-phosphate is required as a cofactor.

The protein operates within mycotoxin biosynthesis. In terms of biological role, aminotransferase; part of the gene cluster that mediates the biosynthesis of gramillins A and B, bicyclic lipopeptides that induce cell death in maize leaves but not in wheat leaves. The nonribosomal peptide synthetase GRA1 incorporates respectively a glutamic adic (Glu), a leucine (Leu), a serine (Ser), a hydroxyglutamine (HOGln), a 2-amino decanoic acid, and 2 cysteins (CysB and CysA). The biosynthesis of 2-amino decanoic acid incorporated in gramillins could be initiated by a fatty acid synthase composed of the alpha and beta subunits FGSG_00036 and FGSG_11656. The cytochrome P450 monooxygenase FGSG_15680 could hydroxylate the fatty acid chain. Subsequent oxidation to the ketone by the oxidoreductase FGSG_00048 and transamination by aminotransferase FGSG_00049 could form 2-amino-decanoic acid. On the other hand, FGSG_15680 could also be responsible for the HO-modified glutamine at the gamma-position. Whether hydroxylation occurs on the fully assembled product or on the Gln residue prior to assembly into the gramillins requires further proof. The thioredoxin FGSG_00043 could also be required for the disulfide-bond formation between CysA and CysB. The specific involvement of the remaining proteins from the cluster is more difficult to discern, but could have broader regulatory (FGSG_00040 and FGSG_11657) or enzymatic functions (FGSG_00044 and FGSG_00045). The final C-domain of GRA1 does not possess the expected sequence of a termination CT domain, often implicated in macrocyclization and release of a cyclopeptidein fungal NRPs; and the thioesterase FGSG_00047 may act in concert with the terminal C-domain of GRA1 to catalyze the formation of the macrocyclic anhydride and release of the products. This Gibberella zeae (strain ATCC MYA-4620 / CBS 123657 / FGSC 9075 / NRRL 31084 / PH-1) (Wheat head blight fungus) protein is Aminotransferase FGSG_00049.